The sequence spans 389 residues: MNLHEYQAKQLFEHYGLPVKNGAVCQSVDEVDLVLAQLSGDKWAAKCQVHAGGRGKAGGVKLVQDVEEARSFAEKWLGQRLVTFQTDKLGQPVNQIYFEETCDIDKEFYLSAVVDRASQKVVFIASPAGGMDIEEVAQNTPHLLHKVEIDPLFGGLPYQGRELAFKLGLSGTQNKQFTDIFMGLSRLFLEKDLSLLEVNPLVLTQQGNLVCLDAKIAVDDNALFRHKDLSALQDLTQNDAREAEAEKFQLNYVALEGDIGCMVNGAGLAMGTMDIVKLYGGKPANFLDVGGGATKERVAEAFKIILTDPSVKVILVNIFGGIVRCDLIAEGVIAAVNEVGVRVPVVVRLEGTNAEIGRQILAESDVNILTAHSLQQAAELAVNAAKGEH.

ATP is bound by residues lysine 46, 53-55 (GRG), glutamate 99, cysteine 102, and glutamate 107. Mg(2+) contacts are provided by asparagine 199 and aspartate 213. Substrate is bound by residues asparagine 264 and 321 to 323 (GIV).

It belongs to the succinate/malate CoA ligase beta subunit family. Heterotetramer of two alpha and two beta subunits. It depends on Mg(2+) as a cofactor.

It carries out the reaction succinate + ATP + CoA = succinyl-CoA + ADP + phosphate. The catalysed reaction is GTP + succinate + CoA = succinyl-CoA + GDP + phosphate. Its pathway is carbohydrate metabolism; tricarboxylic acid cycle; succinate from succinyl-CoA (ligase route): step 1/1. Functionally, succinyl-CoA synthetase functions in the citric acid cycle (TCA), coupling the hydrolysis of succinyl-CoA to the synthesis of either ATP or GTP and thus represents the only step of substrate-level phosphorylation in the TCA. The beta subunit provides nucleotide specificity of the enzyme and binds the substrate succinate, while the binding sites for coenzyme A and phosphate are found in the alpha subunit. In Haemophilus influenzae (strain PittEE), this protein is Succinate--CoA ligase [ADP-forming] subunit beta.